A 112-amino-acid chain; its full sequence is uncharacterized protein (112 aa).

The N-terminal stretch at methionine 1 to serine 29 is a signal peptide. Asparagine 84 carries an N-linked (GlcNAc...) asparagine glycan. Positions asparagine 84–histidine 112 are disordered. A compositionally biased stretch (basic and acidic residues) spans glutamate 94–histidine 112.

Its subcellular location is the secreted. This is an uncharacterized protein from Homo sapiens (Human).